The primary structure comprises 521 residues: CD166 antigen (521 aa).

The Extracellular segment spans residues 1 to 465 (GSPVFIAFRS…NREQVNHRAT (465 aa)). N-linked (GlcNAc...) asparagine glycosylation is found at N33, N105, N244, N299, N395, N418, and N437. The Ig-like V-type 2 domain occupies 63–172 (PTIVKVFKQP…YGPSGQKTVQ (110 aa)). 4 disulfides stabilise this stretch: C95/C158, C208/C251, C292/C330, and C373/C423. 3 Ig-like C2-type domains span residues 183-266 (PTEQ…TAIT), 271-347 (DLSL…ESLT), and 354-439 (PQIK…LNVS). The chain crosses the membrane as a helical span at residues 466 to 487 (LIVGIVLRLLHGALVAGVVYWL). The Cytoplasmic portion of the chain corresponds to 488–521 (YVKKSKTASKHVNKDLGNLEENKKLEQNNHRTEA). Residues 500 to 521 (NKDLGNLEENKKLEQNNHRTEA) form a disordered region. Residues 507–521 (EENKKLEQNNHRTEA) show a composition bias toward basic and acidic residues.

As to quaternary structure, homodimer. Interacts (via extracellular domain) with CD6 (via extracellular domain). Homodimerization and interaction with CD6 involve the same region and cannot occur simultaneously. The affinity for CD6 is much higher than the affinity for self-association. Interacts (via glycosylated extracellular domain) with LGALS1 and LGALS3. Interaction with LGALS1 or LGALS3 inhibits interaction with CD6. Glycosylated.

It is found in the cell membrane. Its subcellular location is the cell projection. The protein localises to the axon. It localises to the dendrite. Its function is as follows. Cell adhesion molecule that mediates both heterotypic cell-cell contacts via its interaction with CD6, as well as homotypic cell-cell contacts. Promotes T-cell activation and proliferation via its interactions with CD6. Contributes to the formation and maturation of the immunological synapse via its interactions with CD6. Mediates homotypic interactions with cells that express ALCAM. Mediates attachment of dendritic cells onto endothelial cells via homotypic interaction. Inhibits endothelial cell migration and promotes endothelial tube formation via homotypic interactions. Required for normal organization of the lymph vessel network. Required for normal hematopoietic stem cell engraftment in the bone marrow. Plays a role in hematopoiesis; required for normal numbers of hematopoietic stem cells in bone marrow. Promotes in vitro osteoblast proliferation and differentiation. Promotes neurite extension, axon growth and axon guidance; axons grow preferentially on surfaces that contain ALCAM. Mediates outgrowth and pathfinding for retinal ganglion cell axons. This is CD166 antigen (ALCAM) from Canis lupus familiaris (Dog).